The sequence spans 261 residues: 22 kDa alpha-zein 8b (261 aa).

An N-terminal signal peptide occupies residues leucine 1 to alanine 16.

The protein belongs to the zein family.

Zeins are major seed storage proteins. This chain is 22 kDa alpha-zein 8b, found in Zea mays (Maize).